Consider the following 173-residue polypeptide: Crossover junction endodeoxyribonuclease RuvC (173 aa).

Active-site residues include Asp-8, Glu-67, and Asp-139. Positions 8, 67, and 139 each coordinate Mg(2+).

This sequence belongs to the RuvC family. As to quaternary structure, homodimer which binds Holliday junction (HJ) DNA. The HJ becomes 2-fold symmetrical on binding to RuvC with unstacked arms; it has a different conformation from HJ DNA in complex with RuvA. In the full resolvosome a probable DNA-RuvA(4)-RuvB(12)-RuvC(2) complex forms which resolves the HJ. Mg(2+) is required as a cofactor.

It is found in the cytoplasm. It catalyses the reaction Endonucleolytic cleavage at a junction such as a reciprocal single-stranded crossover between two homologous DNA duplexes (Holliday junction).. Functionally, the RuvA-RuvB-RuvC complex processes Holliday junction (HJ) DNA during genetic recombination and DNA repair. Endonuclease that resolves HJ intermediates. Cleaves cruciform DNA by making single-stranded nicks across the HJ at symmetrical positions within the homologous arms, yielding a 5'-phosphate and a 3'-hydroxyl group; requires a central core of homology in the junction. The consensus cleavage sequence is 5'-(A/T)TT(C/G)-3'. Cleavage occurs on the 3'-side of the TT dinucleotide at the point of strand exchange. HJ branch migration catalyzed by RuvA-RuvB allows RuvC to scan DNA until it finds its consensus sequence, where it cleaves and resolves the cruciform DNA. This chain is Crossover junction endodeoxyribonuclease RuvC, found in Edwardsiella ictaluri (strain 93-146).